Consider the following 385-residue polypeptide: uncharacterized protein (385 aa).

Zn(2+) contacts are provided by aspartate 180, histidine 258, and histidine 275.

It belongs to the iron-containing alcohol dehydrogenase family. The cofactor is Zn(2+).

This is an uncharacterized protein from Synechocystis sp. (strain ATCC 27184 / PCC 6803 / Kazusa).